The primary structure comprises 508 residues: UDP-N-acetylmuramoylalanine--D-glutamate ligase (508 aa).

ATP is bound at residue 138–144 (GTNGKTT). The tract at residues 294–314 (FDEPAPRRKKDAPPPTRAGGR) is disordered.

This sequence belongs to the MurCDEF family.

It is found in the cytoplasm. The catalysed reaction is UDP-N-acetyl-alpha-D-muramoyl-L-alanine + D-glutamate + ATP = UDP-N-acetyl-alpha-D-muramoyl-L-alanyl-D-glutamate + ADP + phosphate + H(+). It functions in the pathway cell wall biogenesis; peptidoglycan biosynthesis. Functionally, cell wall formation. Catalyzes the addition of glutamate to the nucleotide precursor UDP-N-acetylmuramoyl-L-alanine (UMA). This is UDP-N-acetylmuramoylalanine--D-glutamate ligase from Bordetella parapertussis (strain 12822 / ATCC BAA-587 / NCTC 13253).